The sequence spans 313 residues: MKLLILTCLVAAAFAMPRLHSRNAVSSQTQQQHSSSEEIFKQPKYLNLNQEFVNNMNRQRALLTEQNDEIKVTMDAASEEQAMASAQEDSSISSSSEESEEAIPNITEQKNIANEDMLNQCTLEQLQRQFKYNQLLQKASLAKQASLFQQPSLVQQASLFQQPSLLQQASLFQQPSMAQQASLLQQLLLAQQPSLALQVSPAQQSSLVQQAFLAQQASLAQKHHPRLSQSYYPHMEQPYRMNAYSQVQMRHPMSVVDQALAQFSVQPFPQIFQYDAFPLWAYFPQDMQYLTPKAVLNTFKPIVSKDTEKTNVW.

An N-terminal signal peptide occupies residues 1–15; sequence MKLLILTCLVAAAFA. A compositionally biased stretch (low complexity) spans 77–96; it reads ASEEQAMASAQEDSSISSSS. The disordered stretch occupies residues 77–111; sequence ASEEQAMASAQEDSSISSSSEESEEAIPNITEQKN. Phosphoserine occurs at positions 90, 91, 93, 94, 95, and 96. 15 consecutive repeat copies span residues 135 to 140, 141 to 146, 147 to 152, 153 to 158, 159 to 164, 165 to 170, 171 to 176, 177 to 182, 183 to 188, 189 to 194, 195 to 200, 201 to 206, 207 to 212, 213 to 218, and 219 to 224. The tract at residues 135 to 224 is 15 X 6 AA tandem repeats; the sequence is LLQKASLAKQ…QQASLAQKHH (90 aa).

This sequence belongs to the alpha-casein family. As to expression, mammary gland specific. Secreted in milk.

The protein localises to the secreted. Important role in the capacity of milk to transport calcium phosphate. The polypeptide is Alpha-S1-casein (Csn1s1) (Mus musculus (Mouse)).